Consider the following 427-residue polypeptide: Histidine--tRNA ligase (427 aa).

Belongs to the class-II aminoacyl-tRNA synthetase family. As to quaternary structure, homodimer.

It localises to the cytoplasm. The catalysed reaction is tRNA(His) + L-histidine + ATP = L-histidyl-tRNA(His) + AMP + diphosphate + H(+). This is Histidine--tRNA ligase from Chloroherpeton thalassium (strain ATCC 35110 / GB-78).